Here is a 324-residue protein sequence, read N- to C-terminus: MKQVNGQKLLDSLGSGVAAIRGRLTPDAPMDRVTWFRAGGLAELMFQPHDTDDLVAFLKLVPEEVPVMVVGVGSNLLVRDGGIPGVVIRLSAKGFGDLELAGENRIKAGAICPDKNIAAMALDHGIGGFYFYYGIPGSIGGALRMNAGANSGETSERVVEVHAVDRKGNRHVLSKAEMGYGYRHSGAAKELIFTHAIFEGYAEDKTKIRTDMDAVRQHRETVQPIREKTGGSTFKNPDGHSAWKLIDEAGCRGMMIGNAQMSPLHCNFMINTGQATGYELEYLGETVRQRVMEHSGVKLEWEIKRVGNFMPGYEIREFLGRATA.

Positions 36 to 203 (FRAGGLAELM…THAIFEGYAE (168 aa)) constitute an FAD-binding PCMH-type domain. Arg183 is an active-site residue. Ser232 (proton donor) is an active-site residue. Glu302 is an active-site residue.

It belongs to the MurB family. Requires FAD as cofactor.

The protein localises to the cytoplasm. The catalysed reaction is UDP-N-acetyl-alpha-D-muramate + NADP(+) = UDP-N-acetyl-3-O-(1-carboxyvinyl)-alpha-D-glucosamine + NADPH + H(+). It participates in cell wall biogenesis; peptidoglycan biosynthesis. Cell wall formation. This Rhizobium meliloti (strain 1021) (Ensifer meliloti) protein is UDP-N-acetylenolpyruvoylglucosamine reductase.